Reading from the N-terminus, the 224-residue chain is Charged multivesicular body protein 3 (224 aa).

Residue G2 is the site of N-myristoyl glycine attachment. Residues 2–113 are intramolecular interaction with C-terminus; sequence GLFGKTQEKP…LQKSTEVMKA (112 aa). A coiled-coil region spans residues 22–54; sequence KIRKEMRVVDRQIRDIQREEEKVKRSVKDAAKK. Important for autoinhibitory function regions lie at residues 59–64 and 168–169; these read VCVVLA and IL. Residues 149–224 adopt a coiled-coil conformation; that stretch reads ESMDDQEEME…MQSRLATLRS (76 aa). Residues 151-222 form an intramolecular interaction with N-terminus region; sequence MDDQEEMEEA…EAMQSRLATL (72 aa). Residues 151–224 are interaction with VPS4A; sequence MDDQEEMEEA…MQSRLATLRS (74 aa). K179 participates in a covalent cross-link: Glycyl lysine isopeptide (Lys-Gly) (interchain with G-Cter in ubiquitin). Residues 180-224 are disordered; that stretch reads APSKVTDALPEPEPAGAMAASEEGEEEEDEEDLEAMQSRLATLRS. 3 interaction with STAMBP regions span residues 196–224, 205–209, and 223–224; these read AMAASEEGEEEEDEEDLEAMQSRLATLRS, EEEDE, and RS. At S200 the chain carries Phosphoserine. An MIT-interacting motif motif is present at residues 201–213; the sequence is EEGEEEEDEEDLE. A compositionally biased stretch (acidic residues) spans 201-213; sequence EEGEEEEDEEDLE.

The protein belongs to the SNF7 family. As to quaternary structure, probable core component of the endosomal sorting required for transport complex III (ESCRT-III). ESCRT-III components are thought to multimerize to form a flat lattice on the perimeter membrane of the endosome. Several assembly forms of ESCRT-III may exist that interact and act sequentially. Forms a metastable monomer in solution; its core structure (without part of the putative autoinhibitory C-terminal acidic region) oligomerizes into a flat lattice via two different dimerization interfaces. In vitro, heteromerizes with CHMP2A (but not CHMP4) to form helical tubular structures that expose membrane-interacting sites on the outside whereas VPS4B can associate on the inside of the tubule. May interact with IGFBP7; the relevance of such interaction however remains unclear. Interacts with CHMP2A. Interacts with CHMP4A; the interaction requires the release of CHMP4A autoinhibition. Interacts with VPS4A. Interacts with STAMBP; the interaction appears to relieve the autoinhibition of CHMP3. Interacts with VTA1. As to expression, expressed in lung, testis, heart, spleen, skeletal muscle, kidney, liver and brain.

The protein resides in the cytoplasm. It is found in the cytosol. It localises to the membrane. Its subcellular location is the endosome. The protein localises to the late endosome membrane. Functionally, probable core component of the endosomal sorting required for transport complex III (ESCRT-III) which is involved in multivesicular bodies (MVBs) formation and sorting of endosomal cargo proteins into MVBs. MVBs contain intraluminal vesicles (ILVs) that are generated by invagination and scission from the limiting membrane of the endosome and mostly are delivered to lysosomes enabling degradation of membrane proteins, such as stimulated growth factor receptors, lysosomal enzymes and lipids. The MVB pathway appears to require the sequential function of ESCRT-O, -I,-II and -III complexes. ESCRT-III proteins mostly dissociate from the invaginating membrane before the ILV is released. The ESCRT machinery also functions in topologically equivalent membrane fission events, such as the terminal stages of cytokinesis. ESCRT-III proteins are believed to mediate the necessary vesicle extrusion and/or membrane fission activities, possibly in conjunction with the AAA ATPase VPS4. Selectively binds to phosphatidylinositol 3,5-bisphosphate PtdIns(3,5)P2 and PtdIns(3,4)P2 in preference to other phosphoinositides tested. Involved in late stages of cytokinesis. Plays a role in endosomal sorting/trafficking of EGF receptor. This is Charged multivesicular body protein 3 (Chmp3) from Mus musculus (Mouse).